A 796-amino-acid polypeptide reads, in one-letter code: Protein SEY1 homolog (796 aa).

Over 1-701 (MESSNDFSNK…AGTSISSWRN (701 aa)) the chain is Cytoplasmic. The GB1/RHD3-type G domain occupies 46 to 280 (GFRFNVVTIL…VPSDGFFVYS (235 aa)). 56–63 (GSQSSGKS) is a GTP binding site. The stretch at 554 to 626 (SLVLLLKAAR…DALTLLKVLK (73 aa)) forms a coiled coil. Residues 702–722 (IPPIFWLVLLVLGWNELRSVF) traverse the membrane as a helical segment. Over 723-725 (KVL) the chain is Lumenal. The chain crosses the membrane as a helical span at residues 726-746 (LRFYVVIPLLIVFYFTFSYSA). Over 747–796 (TKLLGPKADQYVKPVRDKVLSLFTALLAWFVRTLHMIASKSSSFKQRPAT) the chain is Cytoplasmic.

It belongs to the TRAFAC class dynamin-like GTPase superfamily. GB1/RHD3 GTPase family. RHD3 subfamily.

It localises to the endoplasmic reticulum membrane. In terms of biological role, probable GTP-binding protein that may be involved in cell development. This is Protein SEY1 homolog from Theileria parva (East coast fever infection agent).